A 685-amino-acid polypeptide reads, in one-letter code: Sorbicillinoid biosynthetic cluster transcription factor sor4 (685 aa).

Over residues 1-14 (MGSSATATTTGEST) the composition is skewed to low complexity. Residues 1 to 20 (MGSSATATTTGESTRQQPGL) form a disordered region. A DNA-binding region (zn(2)-C6 fungal-type) is located at residues 22–49 (CEECRRRKARCDRVRPKCGICADSGRNC). The disordered stretch occupies residues 81–112 (GQNDAPSLPQERDSLGCPTPSEKVSPEGDLVS).

It is found in the nucleus. Its function is as follows. Transcription factor that acts as the main regulator of the gene cluster that mediates the biosynthesis of sorbicillinoids, a diverse group of yellow secondary metabolites that restrict growth of competing pathogenic fungi but not of bacteria. This Hypocrea jecorina (strain QM6a) (Trichoderma reesei) protein is Sorbicillinoid biosynthetic cluster transcription factor sor4.